A 571-amino-acid polypeptide reads, in one-letter code: Proline--tRNA ligase (571 aa).

The protein belongs to the class-II aminoacyl-tRNA synthetase family. ProS type 1 subfamily. As to quaternary structure, homodimer.

Its subcellular location is the cytoplasm. The catalysed reaction is tRNA(Pro) + L-proline + ATP = L-prolyl-tRNA(Pro) + AMP + diphosphate. Its function is as follows. Catalyzes the attachment of proline to tRNA(Pro) in a two-step reaction: proline is first activated by ATP to form Pro-AMP and then transferred to the acceptor end of tRNA(Pro). As ProRS can inadvertently accommodate and process non-cognate amino acids such as alanine and cysteine, to avoid such errors it has two additional distinct editing activities against alanine. One activity is designated as 'pretransfer' editing and involves the tRNA(Pro)-independent hydrolysis of activated Ala-AMP. The other activity is designated 'posttransfer' editing and involves deacylation of mischarged Ala-tRNA(Pro). The misacylated Cys-tRNA(Pro) is not edited by ProRS. The protein is Proline--tRNA ligase of Stutzerimonas stutzeri (strain A1501) (Pseudomonas stutzeri).